A 393-amino-acid chain; its full sequence is Envelope glycoprotein M (393 aa).

Over 1-14 (MCGPRNAEAVSWRS) the chain is Intravirion. Residues 15-35 (WLIEVCGFALAALTLVLTLIF) form a helical membrane-spanning segment. The Virion surface portion of the chain corresponds to 36–83 (ASLPEMGFPCFYATVADYDTLNDTSGGVWTRQPLVAPALFLETPTVTS). Residues 84-104 (FFGFTATVLLAHALYAVAGAV) traverse the membrane as a helical segment. The Intravirion portion of the chain corresponds to 105 to 130 (VLRREAGRLAFQPSVVLYAASTVAAP). Residues 131–151 (GTLMLGALCAWTLQAVVLLMA) form a helical membrane-spanning segment. Over 152–154 (HKQ) the chain is Virion surface. A helical transmembrane segment spans residues 155 to 175 (AGLAAAAYITHFVFLALFGAC). The Intravirion portion of the chain corresponds to 176–207 (HACKGTGDVRAALAASPPLRRVAVHARAVVTN). Residues 208 to 228 (VVLGAVGLGAAVVGLMLGVLL) traverse the membrane as a helical segment. The Virion surface segment spans residues 229–241 (ANSFHISLWKTAE). A helical membrane pass occupies residues 242–262 (AALAVFTLLALALMVFVEVVV). Over 263–264 (SG) the chain is Intravirion. A helical membrane pass occupies residues 265 to 285 (YVQVLPTPAFCVLVASAAFGV). Residues 286–303 (SAHRYFAKFSEALGETHG) are Virion surface-facing. Residues 304-324 (VVIGTRAVLAVLSLIALAMIV) traverse the membrane as a helical segment. Topologically, residues 325-393 (VRLVRACIAH…EVVYENLGFE (69 aa)) are intravirion.

This sequence belongs to the herpesviridae glycoprotein M family. As to quaternary structure, interacts (via N-terminus) with gN (via N-terminus). The gM-gN heterodimer forms the gCII complex.

The protein localises to the virion membrane. Its subcellular location is the host Golgi apparatus. The protein resides in the host trans-Golgi network. It is found in the host endosome membrane. It localises to the host nucleus inner membrane. Its function is as follows. Envelope glycoprotein important for virion assembly and egress. Plays a role in the correct incorporation of gH-gL into virion membrane. Directs the glycoprotein N (gN) to the host trans-Golgi network. This is Envelope glycoprotein M from Suid herpesvirus 1 (SuHV-1).